The sequence spans 204 residues: Crossover junction endodeoxyribonuclease RuvC (204 aa).

Active-site residues include D7, E68, and D141. D7, E68, and D141 together coordinate Mg(2+).

This sequence belongs to the RuvC family. In terms of assembly, homodimer which binds Holliday junction (HJ) DNA. The HJ becomes 2-fold symmetrical on binding to RuvC with unstacked arms; it has a different conformation from HJ DNA in complex with RuvA. In the full resolvosome a probable DNA-RuvA(4)-RuvB(12)-RuvC(2) complex forms which resolves the HJ. Mg(2+) serves as cofactor.

The protein localises to the cytoplasm. The enzyme catalyses Endonucleolytic cleavage at a junction such as a reciprocal single-stranded crossover between two homologous DNA duplexes (Holliday junction).. Functionally, the RuvA-RuvB-RuvC complex processes Holliday junction (HJ) DNA during genetic recombination and DNA repair. Endonuclease that resolves HJ intermediates. Cleaves cruciform DNA by making single-stranded nicks across the HJ at symmetrical positions within the homologous arms, yielding a 5'-phosphate and a 3'-hydroxyl group; requires a central core of homology in the junction. The consensus cleavage sequence is 5'-(A/T)TT(C/G)-3'. Cleavage occurs on the 3'-side of the TT dinucleotide at the point of strand exchange. HJ branch migration catalyzed by RuvA-RuvB allows RuvC to scan DNA until it finds its consensus sequence, where it cleaves and resolves the cruciform DNA. The polypeptide is Crossover junction endodeoxyribonuclease RuvC (Clavibacter sepedonicus (Clavibacter michiganensis subsp. sepedonicus)).